Reading from the N-terminus, the 219-residue chain is Probable GTP-binding protein EngB (219 aa).

Residues leucine 40–lysine 212 form the EngB-type G domain. GTP is bound by residues glycine 48 to serine 55, glycine 75 to glutamine 79, aspartate 93 to glycine 96, threonine 160 to aspartate 163, and valine 191 to serine 193. 2 residues coordinate Mg(2+): serine 55 and threonine 77.

Belongs to the TRAFAC class TrmE-Era-EngA-EngB-Septin-like GTPase superfamily. EngB GTPase family. Mg(2+) is required as a cofactor.

Functionally, necessary for normal cell division and for the maintenance of normal septation. The protein is Probable GTP-binding protein EngB of Rickettsia canadensis (strain McKiel).